We begin with the raw amino-acid sequence, 397 residues long: Nicotinate phosphoribosyltransferase (397 aa).

Histidine 221 is modified (phosphohistidine; by autocatalysis).

This sequence belongs to the NAPRTase family. Post-translationally, transiently phosphorylated on a His residue during the reaction cycle. Phosphorylation strongly increases the affinity for substrates and increases the rate of nicotinate D-ribonucleotide production. Dephosphorylation regenerates the low-affinity form of the enzyme, leading to product release.

It carries out the reaction nicotinate + 5-phospho-alpha-D-ribose 1-diphosphate + ATP + H2O = nicotinate beta-D-ribonucleotide + ADP + phosphate + diphosphate. It participates in cofactor biosynthesis; NAD(+) biosynthesis; nicotinate D-ribonucleotide from nicotinate: step 1/1. Its function is as follows. Catalyzes the synthesis of beta-nicotinate D-ribonucleotide from nicotinate and 5-phospho-D-ribose 1-phosphate at the expense of ATP. The protein is Nicotinate phosphoribosyltransferase of Herminiimonas arsenicoxydans.